The chain runs to 277 residues: Undecaprenyl-diphosphatase (277 aa).

7 consecutive transmembrane segments (helical) span residues 3–23 (IALLIKAAIMGVVEGLTEFLP), 44–64 (AKVFDIAIQTGAIFAVILVYW), 82–102 (QFALNVLVAFVPAVVLGLLFG), 109–129 (LFTPVVVASTFVIGGFIILWA), 188–208 (ATDFSFYLAIPTLIGAGVYSL), 218–238 (ADVPLFMVGLVFSFVSAWLCI), and 249–269 (SFIPFAWYRIAFGVVVLATAW).

It belongs to the UppP family.

Its subcellular location is the cell inner membrane. The catalysed reaction is di-trans,octa-cis-undecaprenyl diphosphate + H2O = di-trans,octa-cis-undecaprenyl phosphate + phosphate + H(+). Functionally, catalyzes the dephosphorylation of undecaprenyl diphosphate (UPP). Confers resistance to bacitracin. The protein is Undecaprenyl-diphosphatase of Polaromonas sp. (strain JS666 / ATCC BAA-500).